The sequence spans 307 residues: L-carnitine dehydrogenase (307 aa).

8–13 (GTGVIG) is an NAD(+) binding site.

The protein belongs to the 3-hydroxyacyl-CoA dehydrogenase family. L-carnitine dehydrogenase subfamily. As to quaternary structure, homodimer.

It localises to the cytoplasm. The catalysed reaction is carnitine + NAD(+) = 3-dehydrocarnitine + NADH + H(+). Its pathway is amine and polyamine metabolism; carnitine metabolism. Its function is as follows. Catalyzes the NAD(+)-dependent oxidation of L-carnitine to 3-dehydrocarnitine. The chain is L-carnitine dehydrogenase from Oceanobacillus iheyensis (strain DSM 14371 / CIP 107618 / JCM 11309 / KCTC 3954 / HTE831).